We begin with the raw amino-acid sequence, 610 residues long: Methionine--tRNA ligase (610 aa).

Residues 12-22 carry the 'HIGH' region motif; that stretch reads PYANGPRHIGH. Zn(2+)-binding residues include C144, C147, C157, and C160. A 'KMSKS' region motif is present at residues 348–352; it reads KFSSS. S351 provides a ligand contact to ATP.

The protein belongs to the class-I aminoacyl-tRNA synthetase family. MetG type 1 subfamily. In terms of assembly, monomer. The cofactor is Zn(2+).

The protein resides in the cytoplasm. It catalyses the reaction tRNA(Met) + L-methionine + ATP = L-methionyl-tRNA(Met) + AMP + diphosphate. Its function is as follows. Is required not only for elongation of protein synthesis but also for the initiation of all mRNA translation through initiator tRNA(fMet) aminoacylation. The sequence is that of Methionine--tRNA ligase from Corynebacterium glutamicum (strain R).